A 580-amino-acid chain; its full sequence is Phosphatase and actin regulator 1 (580 aa).

2 positions are modified to phosphoserine: serine 67 and serine 78. At threonine 104 the chain carries Phosphothreonine. A Nuclear localization signal motif is present at residues 108 to 129; sequence RRRSKFANLGRIFKPWKWRKKK. Residues 138–163 form an RPEL 1 repeat; it reads AALERKISMRQSREELIKRGVLKEIY. 2 disordered regions span residues 330–350 and 374–408; these read SEQR…SSDG and DNKE…DDAS. The segment covering 337 to 348 has biased composition (low complexity); the sequence is STSYHSSGLHSS. A compositionally biased stretch (basic and acidic residues) spans 374–383; it reads DNKENVPHEP. The span at 395–407 shows a compositional bias: acidic residues; the sequence is EEEEEEEDEDDDA. 3 RPEL repeats span residues 422-447, 460-485, and 498-523; these read DSLA…PRQT, TKLT…KPRN, and RRLT…IRFS. The disordered stretch occupies residues 463 to 494; sequence TRRLSQRPTAEELEQRNILKPRNEQEEQEEKR. A Phosphoserine modification is found at serine 467. Basic and acidic residues predominate over residues 471-494; sequence TAEELEQRNILKPRNEQEEQEEKR. Serine 505 bears the Phosphoserine mark.

This sequence belongs to the phosphatase and actin regulator family. Interacts (via RPEL repeats) with ACTA1 and PPP1CA; ACTA1 and PPP1CA compete for the same binding site.

It localises to the cytoplasm. The protein localises to the synapse. Its subcellular location is the nucleus. Binds actin monomers (G actin) and plays a role in multiple processes including the regulation of actin cytoskeleton dynamics, actin stress fibers formation, cell motility and survival, formation of tubules by endothelial cells, and regulation of PPP1CA activity. Involved in the regulation of cortical neuron migration and dendrite arborization. The protein is Phosphatase and actin regulator 1 (Phactr1) of Mus musculus (Mouse).